We begin with the raw amino-acid sequence, 105 residues long: UPF0145 protein GK1405 (105 aa).

It belongs to the UPF0145 family.

The polypeptide is UPF0145 protein GK1405 (Geobacillus kaustophilus (strain HTA426)).